Consider the following 201-residue polypeptide: Receptor expression-enhancing protein 6 (201 aa).

3 helical membrane passes run 36–56 (LAAG…GASL), 89–109 (WVVY…LFWF), and 117–137 (CAFL…LLYH).

This sequence belongs to the DP1 family. As to quaternary structure, interacts with STX3. Interacts with clathrin. In terms of tissue distribution, expressed in the inner segment of rod photoreceptors and outer plexiform layer of the retina (at protein level). Expressed in liver, but not detected in brain, muscle, kidney, retinal cone photoreceptors or retinal ganglion cells (at protein level). Highly expressed in the ganglion cell layer of the retina and in liver, and also detected at low levels in kidney and testis. Isoform 1: Expressed in the retina. Isoform 2: Expressed in liver.

The protein resides in the endoplasmic reticulum membrane. It localises to the cytoplasmic vesicle. The protein localises to the clathrin-coated vesicle membrane. Functionally, required for correct function and survival of retinal photoreceptors. Required for retinal development. In rod photoreceptors, facilitates stability and/or trafficking of guanylate cyclases and is required to maintain endoplasmic reticulum and mitochondrial homeostasis. May play a role in clathrin-coated intracellular vesicle trafficking of proteins from the endoplasmic reticulum to the retinal rod plasma membrane. The sequence is that of Receptor expression-enhancing protein 6 (Reep6) from Mus musculus (Mouse).